Consider the following 535-residue polypeptide: Calcium-dependent protein kinase 7 (535 aa).

Residues 1–29 are disordered; that stretch reads MGNCCGNPSSATNQSKQGKPKNKNNPFYS. Gly-2 carries N-myristoyl glycine lipidation. Positions 59-317 constitute a Protein kinase domain; it reads YDLGREVGRG…AAQVLEHTWI (259 aa). Residues 65-73 and Lys-88 each bind ATP; that span reads VGRGEFGIT. Asp-183 functions as the Proton acceptor in the catalytic mechanism. The residue at position 223 (Ser-223) is a Phosphoserine. Residues 323-353 form an autoinhibitory domain region; sequence APNVSLGETVKARLKQFSVMNKLKKRALRVI. 4 EF-hand domains span residues 360-395, 396-431, 432-467, and 468-504; these read EEAA…AGQQ, IADT…LKKM, ANDE…ELDN, and TSSE…GTDW. Ca(2+) is bound by residues Asp-373, Asn-375, Lys-379, Glu-384, Asp-409, Asp-411, Asp-413, Thr-415, Glu-420, Asp-445, Asn-447, Ser-449, Tyr-451, Glu-456, Asp-482, Asp-484, Asp-486, and Arg-488. Ser-490 bears the Phosphoserine mark. Glu-493 contacts Ca(2+).

It belongs to the protein kinase superfamily. Ser/Thr protein kinase family. CDPK subfamily.

The protein resides in the cell membrane. It carries out the reaction L-seryl-[protein] + ATP = O-phospho-L-seryl-[protein] + ADP + H(+). The catalysed reaction is L-threonyl-[protein] + ATP = O-phospho-L-threonyl-[protein] + ADP + H(+). With respect to regulation, activated by calcium. Autophosphorylation may play an important role in the regulation of the kinase activity. Functionally, may play a role in signal transduction pathways that involve calcium as a second messenger. The protein is Calcium-dependent protein kinase 7 (CPK7) of Arabidopsis thaliana (Mouse-ear cress).